The following is a 220-amino-acid chain: Probable transcriptional regulator NRG2 (220 aa).

2 consecutive C2H2-type zinc fingers follow at residues 153 to 175 (HFCKICSTGFTTSGHLSRHNRIH) and 181 to 205 (HICPHEGCGQRFSRHDNCNQHYRTH).

Its subcellular location is the nucleus. Functionally, transcriptional repressor. This Saccharomyces cerevisiae (strain ATCC 204508 / S288c) (Baker's yeast) protein is Probable transcriptional regulator NRG2 (NRG2).